The primary structure comprises 154 residues: Lipoprotein signal peptidase (154 aa).

The next 3 membrane-spanning stretches (helical) occupy residues 4–24, 62–82, and 84–104; these read IIIPIITILLIALDQLSKLWI, LFTLITIFVVCVAIIYLMKHI, and GSYWLLISLTLIISGGLGNFI. Catalysis depends on residues Asp-114 and Asp-130. A helical transmembrane segment spans residues 125–145; it reads IFNVADSYLTIGIICLMIALW.

It belongs to the peptidase A8 family.

The protein localises to the cell membrane. It catalyses the reaction Release of signal peptides from bacterial membrane prolipoproteins. Hydrolyzes -Xaa-Yaa-Zaa-|-(S,diacylglyceryl)Cys-, in which Xaa is hydrophobic (preferably Leu), and Yaa (Ala or Ser) and Zaa (Gly or Ala) have small, neutral side chains.. It functions in the pathway protein modification; lipoprotein biosynthesis (signal peptide cleavage). This protein specifically catalyzes the removal of signal peptides from prolipoproteins. The sequence is that of Lipoprotein signal peptidase from Streptococcus agalactiae serotype Ia (strain ATCC 27591 / A909 / CDC SS700).